The primary structure comprises 209 residues: MDGVTVIGHPLVQHKLTIMRKKETSTAGFRRLLKEISTLLCYEVTRDLELTTERIETPLVETDAPVLEGKKLVFASILRAGNGLLEGMLELVPSARVAHIGVYRDHETLQAVEYFFKAPDNINERLVIVVDPMLATGNSAIAAIEKLKERGARNIRFLCLLAAPEGIRNFQGAHPDVPIFTASIDSHLNEKGYIVPGLGDAGDRMYGTK.

5-phospho-alpha-D-ribose 1-diphosphate contacts are provided by residues arginine 79, arginine 104, and 131–139; that span reads DPMLATGNS. Residues isoleucine 194 and 199–201 contribute to the uracil site; that span reads GDA. Aspartate 200 contributes to the 5-phospho-alpha-D-ribose 1-diphosphate binding site.

Belongs to the UPRTase family. It depends on Mg(2+) as a cofactor.

It carries out the reaction UMP + diphosphate = 5-phospho-alpha-D-ribose 1-diphosphate + uracil. The protein operates within pyrimidine metabolism; UMP biosynthesis via salvage pathway; UMP from uracil: step 1/1. Allosterically activated by GTP. Functionally, catalyzes the conversion of uracil and 5-phospho-alpha-D-ribose 1-diphosphate (PRPP) to UMP and diphosphate. This Rhizobium meliloti (strain 1021) (Ensifer meliloti) protein is Uracil phosphoribosyltransferase.